The following is a 507-amino-acid chain: RNA-splicing ligase RtcB homolog (507 aa).

Aspartate 121, cysteine 124, histidine 229, histidine 261, and histidine 355 together coordinate Mn(2+). A GMP-binding site is contributed by asparagine 228–glutamate 232. GMP-binding positions include histidine 355–asparagine 356, glycine 404–methionine 407, serine 411, histidine 430–glycine 433, and lysine 506. The active-site GMP-histidine intermediate is the histidine 430.

The protein belongs to the RtcB family. Catalytic component of the tRNA-splicing ligase complex. The cofactor is Mn(2+).

It catalyses the reaction a 3'-end 3'-phospho-ribonucleotide-RNA + a 5'-end dephospho-ribonucleoside-RNA + GTP = a ribonucleotidyl-ribonucleotide-RNA + GMP + diphosphate. The enzyme catalyses a 3'-end 2',3'-cyclophospho-ribonucleotide-RNA + a 5'-end dephospho-ribonucleoside-RNA + GTP + H2O = a ribonucleotidyl-ribonucleotide-RNA + GMP + diphosphate + H(+). In terms of biological role, catalytic subunit of the tRNA-splicing ligase complex that acts by directly joining spliced tRNA halves to mature-sized tRNAs by incorporating the precursor-derived splice junction phosphate into the mature tRNA as a canonical 3',5'-phosphodiester. May act as an RNA ligase with broad substrate specificity, and may function toward other RNAs. In Theileria parva (East coast fever infection agent), this protein is RNA-splicing ligase RtcB homolog.